A 193-amino-acid chain; its full sequence is 3-isopropylmalate dehydratase small subunit (193 aa).

It belongs to the LeuD family. LeuD type 1 subfamily. In terms of assembly, heterodimer of LeuC and LeuD.

It catalyses the reaction (2R,3S)-3-isopropylmalate = (2S)-2-isopropylmalate. It functions in the pathway amino-acid biosynthesis; L-leucine biosynthesis; L-leucine from 3-methyl-2-oxobutanoate: step 2/4. Its function is as follows. Catalyzes the isomerization between 2-isopropylmalate and 3-isopropylmalate, via the formation of 2-isopropylmaleate. The chain is 3-isopropylmalate dehydratase small subunit from Listeria monocytogenes serotype 4b (strain CLIP80459).